The chain runs to 484 residues: UDP-N-acetylmuramate--L-alanine ligase (484 aa).

An ATP-binding site is contributed by 125–131 (GTHGKTT).

Belongs to the MurCDEF family.

It localises to the cytoplasm. The catalysed reaction is UDP-N-acetyl-alpha-D-muramate + L-alanine + ATP = UDP-N-acetyl-alpha-D-muramoyl-L-alanine + ADP + phosphate + H(+). It functions in the pathway cell wall biogenesis; peptidoglycan biosynthesis. Cell wall formation. The polypeptide is UDP-N-acetylmuramate--L-alanine ligase (Buchnera aphidicola subsp. Acyrthosiphon pisum (strain Tuc7)).